A 358-amino-acid chain; its full sequence is 3-dehydroquinate synthase (358 aa).

Residues 70 to 75, 104 to 108, 128 to 129, K141, K150, and 168 to 171 each bind NAD(+); these read DGEQFK, GVIGD, TT, and CLHT. E183, H246, and H263 together coordinate Zn(2+).

Belongs to the sugar phosphate cyclases superfamily. Dehydroquinate synthase family. Requires Co(2+) as cofactor. Zn(2+) serves as cofactor. It depends on NAD(+) as a cofactor.

Its subcellular location is the cytoplasm. The enzyme catalyses 7-phospho-2-dehydro-3-deoxy-D-arabino-heptonate = 3-dehydroquinate + phosphate. Its pathway is metabolic intermediate biosynthesis; chorismate biosynthesis; chorismate from D-erythrose 4-phosphate and phosphoenolpyruvate: step 2/7. Catalyzes the conversion of 3-deoxy-D-arabino-heptulosonate 7-phosphate (DAHP) to dehydroquinate (DHQ). This chain is 3-dehydroquinate synthase, found in Shewanella baltica (strain OS195).